The following is a 111-amino-acid chain: Large ribosomal subunit protein uL22 (111 aa).

The protein belongs to the universal ribosomal protein uL22 family. Part of the 50S ribosomal subunit.

Its function is as follows. This protein binds specifically to 23S rRNA; its binding is stimulated by other ribosomal proteins, e.g. L4, L17, and L20. It is important during the early stages of 50S assembly. It makes multiple contacts with different domains of the 23S rRNA in the assembled 50S subunit and ribosome. Functionally, the globular domain of the protein is located near the polypeptide exit tunnel on the outside of the subunit, while an extended beta-hairpin is found that lines the wall of the exit tunnel in the center of the 70S ribosome. The protein is Large ribosomal subunit protein uL22 of Wigglesworthia glossinidia brevipalpis.